Consider the following 435-residue polypeptide: NADH-quinone oxidoreductase subunit D (435 aa).

It belongs to the complex I 49 kDa subunit family. In terms of assembly, NDH-1 is composed of 14 different subunits. Subunits NuoB, C, D, E, F, and G constitute the peripheral sector of the complex.

The protein resides in the cell inner membrane. It carries out the reaction a quinone + NADH + 5 H(+)(in) = a quinol + NAD(+) + 4 H(+)(out). Its function is as follows. NDH-1 shuttles electrons from NADH, via FMN and iron-sulfur (Fe-S) centers, to quinones in the respiratory chain. The immediate electron acceptor for the enzyme in this species is believed to be ubiquinone. Couples the redox reaction to proton translocation (for every two electrons transferred, four hydrogen ions are translocated across the cytoplasmic membrane), and thus conserves the redox energy in a proton gradient. This is NADH-quinone oxidoreductase subunit D from Xylella fastidiosa (strain 9a5c).